The sequence spans 111 residues: Secreted RxLR effector protein 81 (111 aa).

Positions 1-16 are cleaved as a signal peptide; the sequence is MLVSMLLIIFPNGVSL. N-linked (GlcNAc...) asparagine glycosylation occurs at N52. Residues 73–92 form a disordered region; that stretch reads KKFSSSDEDKSRDVRRRLRP. Residues 88 to 91 carry the RxLR-dEER motif; sequence RRLR.

The protein belongs to the RxLR effector family.

Its subcellular location is the secreted. It localises to the host nucleus. It is found in the host cytoplasm. Secreted effector that partially suppresses the host cell death induced by cell death-inducing proteins. This Plasmopara viticola (Downy mildew of grapevine) protein is Secreted RxLR effector protein 81.